A 517-amino-acid chain; its full sequence is 6-phosphogluconate dehydrogenase, decarboxylating (517 aa).

Residues 35-40 (GLAVMG), 58-60 (NRT), 100-102 (VKA), and N128 contribute to the NADP(+) site. Residues N128 and 154–156 (SGG) each bind substrate. The Proton acceptor role is filled by K208. Residue 211–212 (HN) participates in substrate binding. The active-site Proton donor is the E215. Substrate-binding residues include Y216, K286, R313, R474, and H480.

This sequence belongs to the 6-phosphogluconate dehydrogenase family. As to quaternary structure, homodimer.

The catalysed reaction is 6-phospho-D-gluconate + NADP(+) = D-ribulose 5-phosphate + CO2 + NADPH. The protein operates within carbohydrate degradation; pentose phosphate pathway; D-ribulose 5-phosphate from D-glucose 6-phosphate (oxidative stage): step 3/3. Catalyzes the oxidative decarboxylation of 6-phosphogluconate to ribulose 5-phosphate and CO(2), with concomitant reduction of NADP to NADPH. This is 6-phosphogluconate dehydrogenase, decarboxylating (DOR14) from Candida albicans (Yeast).